A 158-amino-acid polypeptide reads, in one-letter code: 6,7-dimethyl-8-ribityllumazine synthase (158 aa).

Residues phenylalanine 22, 56 to 58 (ALE), and 80 to 82 (VVI) contribute to the 5-amino-6-(D-ribitylamino)uracil site. 85–86 (ET) serves as a coordination point for (2S)-2-hydroxy-3-oxobutyl phosphate. The active-site Proton donor is the histidine 88. Position 113 (asparagine 113) interacts with 5-amino-6-(D-ribitylamino)uracil. Arginine 127 is a binding site for (2S)-2-hydroxy-3-oxobutyl phosphate.

The protein belongs to the DMRL synthase family.

The enzyme catalyses (2S)-2-hydroxy-3-oxobutyl phosphate + 5-amino-6-(D-ribitylamino)uracil = 6,7-dimethyl-8-(1-D-ribityl)lumazine + phosphate + 2 H2O + H(+). The protein operates within cofactor biosynthesis; riboflavin biosynthesis; riboflavin from 2-hydroxy-3-oxobutyl phosphate and 5-amino-6-(D-ribitylamino)uracil: step 1/2. Its function is as follows. Catalyzes the formation of 6,7-dimethyl-8-ribityllumazine by condensation of 5-amino-6-(D-ribitylamino)uracil with 3,4-dihydroxy-2-butanone 4-phosphate. This is the penultimate step in the biosynthesis of riboflavin. The chain is 6,7-dimethyl-8-ribityllumazine synthase from Neisseria meningitidis serogroup C (strain 053442).